The sequence spans 30 residues: Brevinin-2Rg (30 aa).

A disulfide bond links Cys-24 and Cys-30.

As to expression, expressed by the skin glands.

It is found in the secreted. Its function is as follows. Antimicrobial peptide. The polypeptide is Brevinin-2Rg (Pelophylax ridibundus (Marsh frog)).